Here is a 269-residue protein sequence, read N- to C-terminus: Putative pyruvate, phosphate dikinase regulatory protein (269 aa).

147-154 (GVSRTSKT) serves as a coordination point for ADP.

It belongs to the pyruvate, phosphate/water dikinase regulatory protein family. PDRP subfamily.

The catalysed reaction is N(tele)-phospho-L-histidyl/L-threonyl-[pyruvate, phosphate dikinase] + ADP = N(tele)-phospho-L-histidyl/O-phospho-L-threonyl-[pyruvate, phosphate dikinase] + AMP + H(+). It carries out the reaction N(tele)-phospho-L-histidyl/O-phospho-L-threonyl-[pyruvate, phosphate dikinase] + phosphate + H(+) = N(tele)-phospho-L-histidyl/L-threonyl-[pyruvate, phosphate dikinase] + diphosphate. Functionally, bifunctional serine/threonine kinase and phosphorylase involved in the regulation of the pyruvate, phosphate dikinase (PPDK) by catalyzing its phosphorylation/dephosphorylation. This is Putative pyruvate, phosphate dikinase regulatory protein from Geotalea daltonii (strain DSM 22248 / JCM 15807 / FRC-32) (Geobacter daltonii).